We begin with the raw amino-acid sequence, 272 residues long: Phosphate import ATP-binding protein PstB (272 aa).

In terms of domain architecture, ABC transporter spans 26–267 (LDIKNLDLYY…PSEKQTEDYI (242 aa)). 58–65 (GPSGCGKS) lines the ATP pocket.

Belongs to the ABC transporter superfamily. Phosphate importer (TC 3.A.1.7) family. The complex is composed of two ATP-binding proteins (PstB), two transmembrane proteins (PstC and PstA) and a solute-binding protein (PstS).

It localises to the cell inner membrane. The enzyme catalyses phosphate(out) + ATP + H2O = ADP + 2 phosphate(in) + H(+). In terms of biological role, part of the ABC transporter complex PstSACB involved in phosphate import. Responsible for energy coupling to the transport system. This Idiomarina loihiensis (strain ATCC BAA-735 / DSM 15497 / L2-TR) protein is Phosphate import ATP-binding protein PstB.